The sequence spans 520 residues: Glutamate--cysteine ligase (520 aa).

It belongs to the glutamate--cysteine ligase type 1 family. Type 1 subfamily.

The catalysed reaction is L-cysteine + L-glutamate + ATP = gamma-L-glutamyl-L-cysteine + ADP + phosphate + H(+). Its pathway is sulfur metabolism; glutathione biosynthesis; glutathione from L-cysteine and L-glutamate: step 1/2. In Sodalis glossinidius (strain morsitans), this protein is Glutamate--cysteine ligase.